Consider the following 541-residue polypeptide: T-complex protein 1 subunit epsilon (541 aa).

Ala-2 is modified (N-acetylalanine). A Glycyl lysine isopeptide (Lys-Gly) (interchain with G-Cter in SUMO2) cross-link involves residue Lys-20. The residue at position 26 (Ser-26) is a Phosphoserine. Gly-53 contacts ADP. Residue Gly-53 participates in ATP binding. Asp-104 contacts Mg(2+). ADP-binding residues include Gly-105, Thr-106, Thr-107, and Ser-175. ATP contacts are provided by Thr-106 and Thr-107. Residues Lys-210, Lys-214, Lys-265, Lys-275, and Lys-279 each participate in a glycyl lysine isopeptide (Lys-Gly) (interchain with G-Cter in SUMO2) cross-link. A Phosphoserine modification is found at Ser-346. Residue Lys-392 forms a Glycyl lysine isopeptide (Lys-Gly) (interchain with G-Cter in SUMO2) linkage. The ADP site is built by Gly-422, Asp-492, Glu-508, and Lys-513. Residue Gly-422 coordinates ATP. Ser-539 is modified (phosphoserine).

Belongs to the TCP-1 chaperonin family. Component of the chaperonin-containing T-complex (TRiC), a hexadecamer composed of two identical back-to-back stacked rings enclosing a protein folding chamber. Each ring is made up of eight different subunits: TCP1/CCT1, CCT2, CCT3, CCT4, CCT5, CCT6A/CCT6, CCT7, CCT8. Interacts with PACRG. Interacts with DNAAF4. Interacts with DLEC1. Interacts with SPMAP2. Ubiquitinated by the DCX(DCAF12) complex specifically recognizes the diglutamate (Glu-Glu) at the C-terminus, leading to its degradation.

The protein localises to the cytoplasm. It localises to the cytoskeleton. Its subcellular location is the microtubule organizing center. The protein resides in the centrosome. The enzyme catalyses ATP + H2O = ADP + phosphate + H(+). Component of the chaperonin-containing T-complex (TRiC), a molecular chaperone complex that assists the folding of actin, tubulin and other proteins upon ATP hydrolysis. The TRiC complex mediates the folding of WRAP53/TCAB1, thereby regulating telomere maintenance. As part of the TRiC complex may play a role in the assembly of BBSome, a complex involved in ciliogenesis regulating transports vesicles to the cilia. This is T-complex protein 1 subunit epsilon (CCT5) from Homo sapiens (Human).